The primary structure comprises 363 residues: MDNYTYSELLKSLQNKCDNIALIIKPEKIKQELERIEKEQEDPNFWQDVLKARDTNKEKVRLNRLLETYQKTKDSLDESVELFELAQNDNDEVTLSLLYEEAPTLEHSVQKVEIEIMLSGENDASNAIITIQPGAGGTESQDWASILYRMYLRWAERRGFKSEILDYQDGEEAGIKGVAFIIKGENAYGYLKNENGVHRLVRISPFDANAKRHTSFASVQISPELDDDIDIEIDEKDVRYDYYRASGAGGQHVNKTESAVRITHFPTGIVVQCQNDRSQHKNKASALKMLKSKLYELELEKQQNSTKNEEKSEIGWGHQIRSYVLAPYQQVKDARSNIAYSNVEAILDGDIDAILEGVLIAKA.

Glutamine 251 is subject to N5-methylglutamine.

Belongs to the prokaryotic/mitochondrial release factor family. Methylated by PrmC. Methylation increases the termination efficiency of RF2.

It is found in the cytoplasm. Functionally, peptide chain release factor 2 directs the termination of translation in response to the peptide chain termination codons UGA and UAA. The sequence is that of Peptide chain release factor 2 from Helicobacter pylori (strain P12).